The sequence spans 509 residues: Cytochrome P450 monooxygenase FUP2 (509 aa).

The next 2 membrane-spanning stretches (helical) occupy residues 16–36 (FGLA…YGCF) and 224–244 (MVEA…FGIA). Cys450 is a heme binding site.

The protein belongs to the cytochrome P450 family. It depends on heme as a cofactor.

It is found in the membrane. Its pathway is secondary metabolite biosynthesis. Functionally, cytochrome P450 monooxygenase; part of the gene cluster that mediates the biosynthesis of the mycotoxin fusaproliferin (FUP) that belongs to the class of bicyclic sesterterpenoids. FUP2 introduces a hydroxyl group at the C-24 position resulting in the formation of preterpestacin IIa, which can be further oxidized. The oxidation of the hydroxyl group at C-24 to an aldehyde and further to a carboxylic group takes place via unspecific alcohol and aldehyde dehydrogenases and leads to the shunt products preterpestacin IIc and preterpestacin IIb, respectively. The FUP biosynthetic pathway starts with the enzyme encoded by FUP1 that combines a C-terminal prenyltransferase domain responsible for the synthesis of geranylgeranyl diphosphate with the N-terminal terpene cyclase domain, to yield preterpestacin I. Preterpestacin I is then decorated by oxygenation steps that are catalyzed by two cytochrome P450 monooxygenases. First, FUP2 introduces a hydroxyl group at the C-24 position resulting in the formation of preterpestacin IIa. The second P450 monooxygenase catalyzes the hydroxylation at C-16 and C-17 of preterpestacin IIa, producing preterpestacin III. Subsequently, the FAD-dependent oxidoreductase FUP4 catalyzes the oxidation of the hydroxy group at the C-16 position to a keto group, leading to the formation of (-)-terpestacin, which is the immediate precursor of FUP. The final step in the proposed biosynthetic pathway is the addition of an acetyl group at the C-24 position of terpestacin, which is catalyzed by the acetyltransferase FUP5. This is Cytochrome P450 monooxygenase FUP2 from Fusarium proliferatum (strain ET1) (Orchid endophyte fungus).